The chain runs to 286 residues: MQLKVPEHQVAGHIAKDGKPGPLVDDKGRFFKPLQGDSRGEIEVKFYESFSSNTEVPEHIHRYFPVYHGTQAVEGSDGAAMMVLENLLAEYTKPSVMDVKMGSRTWYPDASEEYIQKCLKKDTGTTTVSSGFRISGFEVYDHKESSFWKPERKLLRGLDVDGARLTLRKFVSSNSLSDTGSKPDSAFASSVYGGSHGILTQLLELKTWFENQTLYHFNSCSILMVYENESILKGNDDDARPQVKLVDFAHVLDGNGVIDHNFLGGLCSFINFIREILQSPDESADS.

A disordered region spans residues 1 to 22 (MQLKVPEHQVAGHIAKDGKPGP).

Belongs to the inositol phosphokinase (IPK) family. Phosphorylated. As to expression, detected in leaves, stems, roots, siliques and flowers. Highly expressed in root tissues, anthers, the stigma, pollen grains and growing pollen tubes.

Its subcellular location is the nucleus. It localises to the cell membrane. It carries out the reaction 1D-myo-inositol 1,4,5-trisphosphate + 2 ATP = 1D-myo-inositol 1,3,4,5,6-pentakisphosphate + 2 ADP + 2 H(+). The catalysed reaction is 1D-myo-inositol 1,3,4,6-tetrakisphosphate + ATP = 1D-myo-inositol 1,3,4,5,6-pentakisphosphate + ADP + H(+). Functionally, inositol phosphate kinase with a broad substrate specificity. Phosphorylates inositol 1,4,5-trisphosphate (Ins(1,4,5)P3), inositol 1,4,5,6-tetrakisphosphate (Ins(1,4,5,6)P4), inositol 1,3,4,5-tetrakisphosphate (Ins(1,3,4,5)P4), inositol 1,3,4,6-tetrakisphosphate (Ins(1,3,4,6)P4) and inositol 1,2,3,4,6-pentakisphosphate (Ins(1,2,3,4,6)P5) but not inositol 1,4-bisphosphate (Ins(1,4)P2), inositol 1,3,4-trisphosphate (Ins(1,3,4)P3), inositol 1,2,6-trisphosphate (Ins(1,2,6)P3), inositol 3,4,5,6-tetrakisphosphate (Ins(3,4,5,6)P4), inositol 1,3,4,5,6-pentakisphosphate (Ins(1,3,4,5,6)P5), inositol 1,2,4,5,6-pentakisphosphate (Ins(1,2,4,5,6)P5) or inositol hexakisphosphate (InsP6). Regulates pollen and root development probably through the regulation of InsP3-mediated calcium accumulation. The protein is Inositol polyphosphate multikinase alpha (IPK2a) of Arabidopsis thaliana (Mouse-ear cress).